The chain runs to 189 residues: Putative manganese efflux pump MntP (189 aa).

Transmembrane regions (helical) follow at residues 3 to 23 (PVSL…AAIG), 41 to 61 (IIFG…GQAA), 65 to 85 (VADW…LHMI), 106 to 128 (WILA…GLAF), 141 to 161 (GLAT…LGAV), and 168 to 188 (MVGG…HLSA).

Belongs to the MntP (TC 9.B.29) family.

It is found in the cell inner membrane. In terms of biological role, probably functions as a manganese efflux pump. The sequence is that of Putative manganese efflux pump MntP from Pseudomonas aeruginosa (strain LESB58).